The following is a 103-amino-acid chain: MFLTLALLRKGIPGKQWIGKYRRPRPVTWQIKRNVIKRLEQEAENEYWISRPFMTLEQERGHAAQRREWMWQQIKAERQAKFPEHKYIADQLNHLRVTKTWPS.

It belongs to the mitochondrion-specific ribosomal protein mL63 family.

It localises to the mitochondrion. The protein is Large ribosomal subunit protein mL63 (mrpl57) of Danio rerio (Zebrafish).